Reading from the N-terminus, the 96-residue chain is Prokineticin Bm8-b (96 aa).

The N-terminal stretch at 1–19 (MKCFAQIVVLLLVIAFSHG) is a signal peptide. 4 disulfide bridges follow: C32/C50, C37/C78, C60/C86, and C80/C95.

It belongs to the AVIT (prokineticin) family. In terms of tissue distribution, expressed by the skin glands.

It is found in the secreted. In terms of biological role, potent agonist for both PKR1/PROKR1 and PKR2/PROKR2, and inducer of a potent and long-lasting hyperalgesia. Also potentiates capsaicin-induced TRPV1 current, when tested on DRG neurons. At subnanomolar concentrations, this protein both induces potent chemotaxis of macrophages and stimulates LPS-induced production of the pro-inflammatory cytokines IL-1 and IL-12. In vivo, potently stimulates the contraction of the guinea-pig gastrointestinal (GI) smooth muscle (nanomolar concentration). The chain is Prokineticin Bm8-b from Bombina maxima (Giant fire-bellied toad).